Consider the following 594-residue polypeptide: Jacalin-related lectin 44 (594 aa).

The segment at 1–23 (MIQKLGAKGIKSDERNQREWDDG) is disordered. Jacalin-type lectin domains lie at 2–148 (IQKL…YFIS), 151–293 (PTRL…YFST), 296–441 (PNKL…YYRP), and 448–588 (VKRL…HVIP). Basic and acidic residues predominate over residues 10 to 23 (IKSDERNQREWDDG).

Belongs to the jacalin lectin family.

This Arabidopsis thaliana (Mouse-ear cress) protein is Jacalin-related lectin 44 (JAL44).